The chain runs to 365 residues: Centrosomal protein of 41 kDa B (365 aa).

Residues methionine 1 to lysine 14 show a composition bias toward basic and acidic residues. Disordered regions lie at residues methionine 1–tyrosine 23 and glutamate 104–proline 123. The Rhodanese domain maps to glutamate 177 to threonine 274. The disordered stretch occupies residues threonine 329–lysine 365. Over residues serine 342–lysine 365 the composition is skewed to low complexity.

Belongs to the CEP41 family.

Its subcellular location is the cytoplasm. The protein localises to the cytoskeleton. The protein resides in the microtubule organizing center. It is found in the centrosome. It localises to the cell projection. Its subcellular location is the cilium. The protein localises to the cilium basal body. Required during ciliogenesis for tubulin glutamylation in cilium. Probably acts by participating in the transport of tubulin polyglutamylases between the basal body and the cilium. The sequence is that of Centrosomal protein of 41 kDa B (cep41-b) from Xenopus laevis (African clawed frog).